Consider the following 272-residue polypeptide: Hemin import ATP-binding protein HmuV (272 aa).

Residues 2 to 255 (LNAEHLHVAR…DLIERCYGFR (254 aa)) enclose the ABC transporter domain. Residue 34–41 (GRNGAGKS) coordinates ATP.

Belongs to the ABC transporter superfamily. Heme (hemin) importer (TC 3.A.1.14.5) family. The complex is composed of two ATP-binding proteins (HmuV), two transmembrane proteins (HmuU) and a solute-binding protein (HmuT).

The protein localises to the cell inner membrane. Its function is as follows. Part of the ABC transporter complex HmuTUV involved in hemin import. Responsible for energy coupling to the transport system. This chain is Hemin import ATP-binding protein HmuV, found in Burkholderia thailandensis (strain ATCC 700388 / DSM 13276 / CCUG 48851 / CIP 106301 / E264).